Reading from the N-terminus, the 189-residue chain is Ribosome maturation factor RimM (189 aa).

The PRC barrel domain maps to 95–177 (EDDEFYYADL…AGLVDDPEEL (83 aa)).

This sequence belongs to the RimM family. As to quaternary structure, binds ribosomal protein uS19.

Its subcellular location is the cytoplasm. An accessory protein needed during the final step in the assembly of 30S ribosomal subunit, possibly for assembly of the head region. Essential for efficient processing of 16S rRNA. May be needed both before and after RbfA during the maturation of 16S rRNA. It has affinity for free ribosomal 30S subunits but not for 70S ribosomes. The sequence is that of Ribosome maturation factor RimM from Rhizobium leguminosarum bv. trifolii (strain WSM2304).